A 449-amino-acid chain; its full sequence is XK-related protein 2 (449 aa).

10 helical membrane-spanning segments follow: residues 35–55 (FSILFSTFLYCGEAASALYMV), 68–88 (TYTFSFFMFSSIMVQLTLIFV), 98–118 (LSLFMHLILLGPVIRCLEAMI), 174–194 (IQAFLGSVPQLTYQLYVSLIS), 202–222 (VVLMVFSLVSVTYGATLCNML), 241–261 (LCITIWRTLEITSRLLILVLF), 269–289 (AVPFLVLNFLIILFEPWIKFW), 306–326 (VGTLVVLISVTILYAGINFSC), 357–377 (LVENVIMVLVFKFFGVKVLLN), and 382–402 (LIALQLIIAYLISIGFMLLFF).

It belongs to the XK family. As to expression, expressed predominantly in the placenta, in syncytiotrophoblasts. Moderate levels in the adrenal gland, low levels in the trachea and very low levels in the bone marrow.

Its subcellular location is the cell membrane. This chain is XK-related protein 2 (XKRX), found in Homo sapiens (Human).